The sequence spans 98 residues: Small ribosomal subunit protein bS18c (98 aa).

Over residues 1–13 (MSKQSFDFKRYKP) the composition is skewed to basic and acidic residues. The interval 1-26 (MSKQSFDFKRYKPEAPSGSRKRPLKK) is disordered.

The protein belongs to the bacterial ribosomal protein bS18 family. As to quaternary structure, part of the 30S ribosomal subunit.

It is found in the plastid. The protein localises to the chloroplast. The sequence is that of Small ribosomal subunit protein bS18c from Gnetum parvifolium (Small-leaved jointfir).